The following is a 159-amino-acid chain: Ribosomal RNA large subunit methyltransferase H (159 aa).

S-adenosyl-L-methionine-binding positions include Leu76, Gly108, and 127 to 132 (LSKMTY).

The protein belongs to the RNA methyltransferase RlmH family. Homodimer.

Its subcellular location is the cytoplasm. The enzyme catalyses pseudouridine(1915) in 23S rRNA + S-adenosyl-L-methionine = N(3)-methylpseudouridine(1915) in 23S rRNA + S-adenosyl-L-homocysteine + H(+). Its function is as follows. Specifically methylates the pseudouridine at position 1915 (m3Psi1915) in 23S rRNA. The chain is Ribosomal RNA large subunit methyltransferase H from Ruminiclostridium cellulolyticum (strain ATCC 35319 / DSM 5812 / JCM 6584 / H10) (Clostridium cellulolyticum).